Here is a 357-residue protein sequence, read N- to C-terminus: DNA polymerase IV (357 aa).

The UmuC domain occupies 4–185; that stretch reads IIHVDMDCYF…LSLRQIPGVG (182 aa). Mg(2+) contacts are provided by aspartate 8 and aspartate 103. Residue glutamate 104 is part of the active site.

Belongs to the DNA polymerase type-Y family. Monomer. Mg(2+) is required as a cofactor.

The protein localises to the cytoplasm. It carries out the reaction DNA(n) + a 2'-deoxyribonucleoside 5'-triphosphate = DNA(n+1) + diphosphate. Poorly processive, error-prone DNA polymerase involved in untargeted mutagenesis. Copies undamaged DNA at stalled replication forks, which arise in vivo from mismatched or misaligned primer ends. These misaligned primers can be extended by PolIV. Exhibits no 3'-5' exonuclease (proofreading) activity. May be involved in translesional synthesis, in conjunction with the beta clamp from PolIII. The polypeptide is DNA polymerase IV (Shewanella oneidensis (strain ATCC 700550 / JCM 31522 / CIP 106686 / LMG 19005 / NCIMB 14063 / MR-1)).